Reading from the N-terminus, the 680-residue chain is Probable potassium transport system protein Kup (680 aa).

The next 12 membrane-spanning stretches (helical) occupy residues 16–36 (IAGMLITMGVVYGDIGTSPLY), 60–80 (ISLVFWTLMLMTTVKYVLIAL), 103–123 (WLVIPAIIGGATLLADGMLTP), 150–170 (EVIILTVTILSVLFFIQKFGT), 177–197 (FGPIMLIWFTFIGAIGVMNLM), 222–242 (VGILILGSVFLATTGAEALYS), 255–275 (SWPYIAACLVLNYFGQGVWLL), 302–322 (IPAILLATVAAIIASQALISG), 351–371 (LYISIVNWILWAVCLAVVFYF), 380–400 (AYGLAITITMLMTTILLFHYL), 407–427 (WFLAYVVLLFFGAIETIFFIA), and 432–452 (FMHGGYVTVLIAFVILFIMFV).

It belongs to the HAK/KUP transporter (TC 2.A.72) family.

Its subcellular location is the cell membrane. It catalyses the reaction K(+)(in) + H(+)(in) = K(+)(out) + H(+)(out). In terms of biological role, transport of potassium into the cell. Likely operates as a K(+):H(+) symporter. The sequence is that of Probable potassium transport system protein Kup from Latilactobacillus sakei subsp. sakei (strain 23K) (Lactobacillus sakei subsp. sakei).